The chain runs to 131 residues: uncharacterized protein (131 aa).

This is an uncharacterized protein from Orgyia pseudotsugata multicapsid polyhedrosis virus (OpMNPV).